The sequence spans 213 residues: Na(+)-translocating NADH-quinone reductase subunit D (213 aa).

Transmembrane regions (helical) follow at residues 14–34, 42–62, 77–97, 101–121, 131–151, 154–174, and 183–203; these read ALWINNQPLVAILGICSALAV, LTMGLAVSFVTGFASFVVSLL, IIISLFVILIDQFLKAFFFNI, LSVFVGLIITNCIVMGRAESM, FLDGLGSGLGYGWVLVCISII, LFGFGTILGFHIIPKIFYASA, and LGLMVLAPSAFFLLGIMVWLV.

This sequence belongs to the NqrDE/RnfAE family. As to quaternary structure, composed of six subunits; NqrA, NqrB, NqrC, NqrD, NqrE and NqrF.

The protein resides in the cell inner membrane. The enzyme catalyses a ubiquinone + n Na(+)(in) + NADH + H(+) = a ubiquinol + n Na(+)(out) + NAD(+). Functionally, NQR complex catalyzes the reduction of ubiquinone-1 to ubiquinol by two successive reactions, coupled with the transport of Na(+) ions from the cytoplasm to the periplasm. NqrA to NqrE are probably involved in the second step, the conversion of ubisemiquinone to ubiquinol. The chain is Na(+)-translocating NADH-quinone reductase subunit D from Chlamydia muridarum (strain MoPn / Nigg).